We begin with the raw amino-acid sequence, 501 residues long: Aldehyde dehydrogenase 1A1 (501 aa).

Position 2 is an N-acetylserine (Ser2). Lys91 and Lys128 each carry N6-acetyllysine. NAD(+) is bound by residues Ile167–Asn170, Lys193–Glu196, Gly226–Pro227, and Gly246–Ser247. Position 252 is an N6-acetyllysine (Lys252). Glu269 acts as the Proton acceptor in catalysis. NAD(+) is bound at residue Glu269–Gly271. Cys303 acts as the Nucleophile in catalysis. Residues Leu336–Ser501 form a mediates interaction with PRMT3 region. Thr337 is modified (phosphothreonine). An NAD(+)-binding site is contributed by Glu349–Lys353. 2 positions are modified to N6-acetyllysine: Lys353 and Lys367. Residue Glu400 to Phe402 participates in NAD(+) binding. An N6-acetyllysine modification is found at Lys410. Ser413 is subject to Phosphoserine. An N6-acetyllysine mark is found at Lys419 and Lys495.

It belongs to the aldehyde dehydrogenase family. Homotetramer. Interacts with PRMT3; the interaction is direct, inhibits ALDH1A1 aldehyde dehydrogenase activity and is independent of the methyltransferase activity of PRMT3. In terms of processing, the N-terminus is blocked most probably by acetylation. Expressed in muscle, liver, small intestine, kidney, brain, lung, heart but not detected in erythrocytes (at protein level).

It is found in the cytoplasm. Its subcellular location is the cytosol. The protein resides in the cell projection. The protein localises to the axon. It carries out the reaction an aldehyde + NAD(+) + H2O = a carboxylate + NADH + 2 H(+). It catalyses the reaction all-trans-retinal + NAD(+) + H2O = all-trans-retinoate + NADH + 2 H(+). The enzyme catalyses 9-cis-retinal + NAD(+) + H2O = 9-cis-retinoate + NADH + 2 H(+). The catalysed reaction is 11-cis-retinal + NAD(+) + H2O = 11-cis-retinoate + NADH + 2 H(+). It carries out the reaction 13-cis-retinal + NAD(+) + H2O = 13-cis-retinoate + NADH + 2 H(+). It catalyses the reaction 3-deoxyglucosone + NAD(+) + H2O = 2-dehydro-3-deoxy-D-gluconate + NADH + 2 H(+). The enzyme catalyses (E)-4-hydroxynon-2-enal + NAD(+) + H2O = (E)-4-hydroxynon-2-enoate + NADH + 2 H(+). The catalysed reaction is malonaldehyde + NAD(+) + H2O = 3-oxopropanoate + NADH + 2 H(+). It carries out the reaction hexanal + NAD(+) + H2O = hexanoate + NADH + 2 H(+). It catalyses the reaction propanal + NAD(+) + H2O = propanoate + NADH + 2 H(+). The enzyme catalyses acetaldehyde + NAD(+) + H2O = acetate + NADH + 2 H(+). The catalysed reaction is benzaldehyde + NAD(+) + H2O = benzoate + NADH + 2 H(+). It carries out the reaction 4-aminobutanal + NAD(+) + H2O = 4-aminobutanoate + NADH + 2 H(+). Its pathway is cofactor metabolism; retinol metabolism. Its function is as follows. Cytosolic dehydrogenase that catalyzes the irreversible oxidation of a wide range of aldehydes to their corresponding carboxylic acid. Functions downstream of retinol dehydrogenases and catalyzes the oxidation of retinaldehyde into retinoic acid, the second step in the oxidation of retinol/vitamin A into retinoic acid. This pathway is crucial to control the levels of retinol and retinoic acid, two important molecules which excess can be teratogenic and cytotoxic. Also oxidizes aldehydes resulting from lipid peroxidation like (E)-4-hydroxynon-2-enal/HNE, malonaldehyde and hexanal that form protein adducts and are highly cytotoxic. By participating for instance to the clearance of (E)-4-hydroxynon-2-enal/HNE in the lens epithelium prevents the formation of HNE-protein adducts and lens opacification. Also functions downstream of fructosamine-3-kinase in the fructosamine degradation pathway by catalyzing the oxidation of 3-deoxyglucosone, the carbohydrate product of fructosamine 3-phosphate decomposition, which is itself a potent glycating agent that may react with lysine and arginine side-chains of proteins. Also has an aminobutyraldehyde dehydrogenase activity and is probably part of an alternative pathway for the biosynthesis of GABA/4-aminobutanoate in midbrain, thereby playing a role in GABAergic synaptic transmission. The chain is Aldehyde dehydrogenase 1A1 from Bos taurus (Bovine).